We begin with the raw amino-acid sequence, 203 residues long: Small ribosomal subunit protein uS4 (203 aa).

The region spanning 93-153 (RRFDNVVFRA…QKSQNLDAVA (61 aa)) is the S4 RNA-binding domain.

This sequence belongs to the universal ribosomal protein uS4 family. As to quaternary structure, part of the 30S ribosomal subunit. Contacts protein S5. The interaction surface between S4 and S5 is involved in control of translational fidelity.

Functionally, one of the primary rRNA binding proteins, it binds directly to 16S rRNA where it nucleates assembly of the body of the 30S subunit. With S5 and S12 plays an important role in translational accuracy. The polypeptide is Small ribosomal subunit protein uS4 (Chlorobium phaeobacteroides (strain BS1)).